Here is a 323-residue protein sequence, read N- to C-terminus: Coiled-coil domain-containing protein 160 (323 aa).

A disordered region spans residues Met1 to Glu81. Positions Ser48–Gly58 are enriched in polar residues. The stretch at Leu144–Thr289 forms a coiled coil.

This sequence belongs to the CCDC160 family.

The protein is Coiled-coil domain-containing protein 160 (Ccdc160) of Mus musculus (Mouse).